We begin with the raw amino-acid sequence, 204 residues long: Leucyl/phenylalanyl-tRNA--protein transferase (204 aa).

Belongs to the L/F-transferase family.

It is found in the cytoplasm. It catalyses the reaction N-terminal L-lysyl-[protein] + L-leucyl-tRNA(Leu) = N-terminal L-leucyl-L-lysyl-[protein] + tRNA(Leu) + H(+). The enzyme catalyses N-terminal L-arginyl-[protein] + L-leucyl-tRNA(Leu) = N-terminal L-leucyl-L-arginyl-[protein] + tRNA(Leu) + H(+). The catalysed reaction is L-phenylalanyl-tRNA(Phe) + an N-terminal L-alpha-aminoacyl-[protein] = an N-terminal L-phenylalanyl-L-alpha-aminoacyl-[protein] + tRNA(Phe). In terms of biological role, functions in the N-end rule pathway of protein degradation where it conjugates Leu, Phe and, less efficiently, Met from aminoacyl-tRNAs to the N-termini of proteins containing an N-terminal arginine or lysine. This is Leucyl/phenylalanyl-tRNA--protein transferase from Rhizobium etli (strain CIAT 652).